The primary structure comprises 283 residues: Undecaprenyl-diphosphatase (283 aa).

7 helical membrane passes run 40–60 (GAAF…IYFF), 85–105 (AKMG…GLLF), 113–133 (LRSL…LTIA), 153–173 (IGWK…IPGS), 193–213 (AARF…VFQL), 227–247 (LIAI…SIAF), and 259–279 (VFII…ATGM).

Belongs to the UppP family.

The protein resides in the cell inner membrane. It carries out the reaction di-trans,octa-cis-undecaprenyl diphosphate + H2O = di-trans,octa-cis-undecaprenyl phosphate + phosphate + H(+). Its function is as follows. Catalyzes the dephosphorylation of undecaprenyl diphosphate (UPP). Confers resistance to bacitracin. This chain is Undecaprenyl-diphosphatase, found in Chlorobium limicola (strain DSM 245 / NBRC 103803 / 6330).